The sequence spans 286 residues: Expansin-like protein 1 (286 aa).

The signal sequence occupies residues 1-21 (MKTFVLFVILLCLTFLSISKS). At 22–265 (ETCPFSQSLV…TGASIGTPSD (244 aa)) the chain is on the extracellular side. The Expansin-like EG45 domain maps to 44 to 145 (AGNCGYENLM…YKVPCGVNGN (102 aa)). 2 cysteine pairs are disulfide-bonded: cysteine 47–cysteine 77 and cysteine 80–cysteine 140. Residues asparagine 82 and asparagine 89 are each glycosylated (N-linked (GlcNAc...) asparagine). The chain crosses the membrane as a helical span at residues 266–286 (ASSLTLYALFSLTILFLVMLN).

It belongs to the expansin family. Expansin A subfamily.

The protein resides in the membrane. Functionally, may serve to lubricate the movement of the cellulose microfibrils during cell growth and wall extension and/or they may serve to maintain the fluid state of the slug cell wall. This Dictyostelium discoideum (Social amoeba) protein is Expansin-like protein 1 (expl1).